A 430-amino-acid polypeptide reads, in one-letter code: Probable proton-coupled zinc antiporter SLC30A4 (430 aa).

Residues 1–113 lie on the Cytoplasmic side of the membrane; sequence MAGPGAWKRL…LLKQRKVKTR (113 aa). Position 36 is a phosphoserine (Ser-36). The chain crosses the membrane as a helical span at residues 114–134; sequence LTIAAVLYLLFMIGELVGGYM. At 135 to 143 the chain is on the lumenal side; it reads ANSLAIMTD. Residues 144–164 traverse the membrane as a helical segment; sequence ALHMLTDLSAIILTLLALWLS. His-146 and Asp-150 together coordinate Zn(2+). The Cytoplasmic portion of the chain corresponds to 165-178; sequence SKSPTRRFTFGFHR. Residues 179 to 199 form a helical membrane-spanning segment; the sequence is LEVLSAMISVMLVYVLMGFLL. At 200–216 the chain is on the lumenal side; the sequence is YEAVQRTIHMNYEINGD. Residues 217–237 form a helical membrane-spanning segment; the sequence is VMLITAAVGVAVNVIMGFLLN. The Cytoplasmic portion of the chain corresponds to 238–275; the sequence is QSGHHHSHAHSHSLPSNSPSMVSSGHNHGQDSLAVRAA. Residues 240-265 are zinc binding; that stretch reads GHHHSHAHSHSLPSNSPSMVSSGHNH. Residues 245–264 form a disordered region; it reads HAHSHSLPSNSPSMVSSGHN. Residues 249–263 are compositionally biased toward low complexity; that stretch reads HSLPSNSPSMVSSGH. Residues 276–296 traverse the membrane as a helical segment; the sequence is FVHALGDLVQSVGVLIAAYII. Residues His-278 and Asp-282 each contribute to the Zn(2+) site. Residues 297-311 are Lumenal-facing; the sequence is RFKPEYKIADPICTY. The helical transmembrane segment at 312 to 332 threads the bilayer; sequence IFSLLVAFTTFRIIWDTVVII. The Cytoplasmic segment spans residues 333–430; that stretch reads LEGVPSHLNV…TCANCHSSST (98 aa).

Belongs to the cation diffusion facilitator (CDF) transporter (TC 2.A.4) family. SLC30A subfamily. As to quaternary structure, homodimerization could regulate efficiency for zinc transport. Interacts with TMEM163. Widely expressed. Highly expressed in the brain and in mammary epithelial cell lines.

It is found in the endosome membrane. It localises to the late endosome membrane. The protein resides in the lysosome membrane. It catalyses the reaction Zn(2+)(in) + 2 H(+)(out) = Zn(2+)(out) + 2 H(+)(in). In terms of biological role, probable proton-coupled zinc ion antiporter mediating zinc import from cytoplasm potentially into the endocytic compartment. Controls zinc deposition in milk. The polypeptide is Probable proton-coupled zinc antiporter SLC30A4 (Mus musculus (Mouse)).